A 396-amino-acid polypeptide reads, in one-letter code: G-protein coupled receptor 84 (396 aa).

Topologically, residues 1–21 (MWNSSDANFSCYHESVLGYRY) are extracellular. Asn-3 and Asn-8 each carry an N-linked (GlcNAc...) asparagine glycan. A helical membrane pass occupies residues 22–42 (FAVIWGVAVAVTGTVGNVLTL). The Cytoplasmic segment spans residues 43–57 (LALAIRPKLRTRFNL). The helical transmembrane segment at 58–78 (LIANLTLADLLYCTLLQPFSV) threads the bilayer. Topologically, residues 79-94 (DTYLHLHWRTGAVFCR) are extracellular. The helical transmembrane segment at 95 to 115 (IFGLLLFTSNSVSILTLCLIA) threads the bilayer. Topologically, residues 116 to 135 (LGRYLLIAHPKLFPQVFSAK) are cytoplasmic. The helical transmembrane segment at 136–156 (GIVLALVGSWVVGVTSFAPLW) threads the bilayer. Topologically, residues 157–180 (NVFVLVPVVCTCSFDRMRGRPYTT) are extracellular. A helical transmembrane segment spans residues 181 to 201 (ILMGIYFVLGLSSVGVFYCLI). The Cytoplasmic portion of the chain corresponds to 202–320 (HRQVKRAARA…PSEFGKVTRM (119 aa)). A phosphoserine mark is found at Ser-221 and Ser-224. The segment at 241 to 310 (LDSGVASRGP…TAGARRATDA (70 aa)) is disordered. Over residues 253 to 269 (GISSEPVSAATTQTLEG) the composition is skewed to polar residues. A phosphothreonine mark is found at Thr-263 and Thr-264. The segment covering 290–308 (SLPEVHRKPRETAGARRAT) has biased composition (basic and acidic residues). The helical transmembrane segment at 321-341 (CFAVFLCFALSYIPFLLLNIL) threads the bilayer. Topologically, residues 342–352 (DARGRAPRVVH) are extracellular. The chain crosses the membrane as a helical span at residues 353–373 (MVAANLTWLNSCINPVLYAAM). Residues 374–396 (NRQFRHAYGSILKRGPQSFRRFH) lie on the Cytoplasmic side of the membrane.

It belongs to the G-protein coupled receptor 1 family. In terms of assembly, interacts with ARRB2 and ARR3. Post-translationally, phosphorylated by a subset of GPR84-activating ligands. Constitutively phosphorylated at Ser-221 and Ser-224 in the absence of 2-HTP. By contrast, Thr-263 and Thr-264 are phosphorylated only following prior cell treatment with 2-HTP. Expressed predominantly in hematopoietic tissues. Expressed mainly in the bone marrow with transcripts also detected in spleen, the lymph node, liver and the lung.

It is found in the cell membrane. Its function is as follows. G protein-coupled receptor that responds endogenously to dietary fatty acids or nutrient, specifically medium-chain free fatty acid (FFA) with carbon chain lengths of C9 to C14. Capric acid (C10:0), undecanoic acid (C11:0) and lauric acid (C12:0) are the most potent agonists. In immune cells, functions as a pro-inflammatory receptor via 6-OAU and promotes the expression of pro-inflammatory mediators such as TNFalpha, IL-6 and IL-12B as well as stimulating chemotactic responses through activation of signaling mediators AKT, ERK and NF-kappa-B (by sim). In addition, triggers increased bacterial adhesion and phagocytosis in macrophages and regulates pro-inflammatory function via enhancing NLRP3 inflammasome activation. Also plays an important role in inflammation by modulating neutrophil functions. Mechanistically, promotes neutrophil chemotaxis, reactive oxygen species (ROS) production and degranulation via LYN-AKT/ERK pathway. To regulate ROS production, communicates with the two formyl peptide receptors FPR2 and FPR1 to control the NADPH oxidase activity in neutrophils. This chain is G-protein coupled receptor 84 (Gpr84), found in Mus musculus (Mouse).